The chain runs to 190 residues: Vascular endothelial growth factor A (190 aa).

The signal sequence occupies residues 1-26; the sequence is MNFLLSWVHWSLALLLYLHHAKWSQA. Cystine bridges form between Cys-51/Cys-93, Cys-82/Cys-127, and Cys-86/Cys-129. A glycan (N-linked (GlcNAc...) asparagine) is linked at Asn-100.

It belongs to the PDGF/VEGF growth factor family. Homodimer; disulfide-linked. Also found as heterodimer with PGF. Interacts with NRP1. Interacts with BSG. Interacts with CD82; this interaction inhibits VEGFA-mediated signaling pathway.

The protein resides in the secreted. In terms of biological role, growth factor active in angiogenesis, vasculogenesis and endothelial cell growth. Induces endothelial cell proliferation, promotes cell migration, inhibits apoptosis and induces permeabilization of blood vessels. Binds to the FLT1/VEGFR1 and KDR/VEGFR2 receptors, heparan sulfate and heparin. Binding to NRP1 receptor initiates a signaling pathway needed for motor neuron axon guidance and cell body migration, including for the caudal migration of facial motor neurons from rhombomere 4 to rhombomere 6 during embryonic development. Also binds the DEAR/FBXW7-AS1 receptor. The polypeptide is Vascular endothelial growth factor A (VEGFA) (Bos taurus (Bovine)).